The chain runs to 92 residues: Large ribosomal subunit protein bL27 (92 aa).

Positions 1-10 are excised as a propeptide; sequence MLLQLQIQLF.

The protein belongs to the bacterial ribosomal protein bL27 family. In terms of processing, the N-terminus is cleaved by ribosomal processing cysteine protease Prp.

This chain is Large ribosomal subunit protein bL27, found in Aster yellows witches'-broom phytoplasma (strain AYWB).